The primary structure comprises 727 residues: Synaptic vesicle glycoprotein 2C (727 aa).

Positions 1–57 (MEDSYKDRTSLMKGAKDIAREVKKQTVKKVNQAVDRAQDEYTQRSYSRFQDEEDDDD) are interaction with SYT1. Residues 1-154 (MEDSYKDRTS…CGHGRFQWAL (154 aa)) lie on the Cytoplasmic side of the membrane. Disordered stretches follow at residues 24–84 (KQTV…GHDE) and 109–128 (VGQP…SERR). Phosphoserine occurs at positions 75 and 76. Threonine 79 is modified (phosphothreonine). Over residues 113-128 (KGDEYKDRRELESERR) the composition is skewed to basic and acidic residues. A helical transmembrane segment spans residues 155–175 (FFVLGMALMADGVEVFVVGFV). The Extracellular portion of the chain corresponds to 176–191 (LPSAETDLCIPNSGSG). The helical transmembrane segment at 192–212 (WLGSIVYLGMMVGAFFWGGLA) threads the bilayer. Over 213 to 226 (DKVGRKQSLLICMS) the chain is Cytoplasmic. A helical transmembrane segment spans residues 227–247 (VNGFFAFLSSFVQGYGFFLFC). Arginine 248 is a topological domain (extracellular). Residues 249–269 (LLSGFGIGGAIPTVFSYFAEV) traverse the membrane as a helical segment. Residues 270-280 (LAREKRGEHLS) lie on the Cytoplasmic side of the membrane. A helical transmembrane segment spans residues 281-301 (WLCMFWMIGGIYASAMAWAII). The Extracellular segment spans residues 302–320 (PHYGWSFSMGSAYQFHSWR). The chain crosses the membrane as a helical span at residues 321-341 (VFVIVCALPCVSSVVALTFMP). Residues 342–437 (ESPRFLLEVG…PVRDNTIKLT (96 aa)) lie on the Cytoplasmic side of the membrane. Residues 438 to 458 (IVWFTLSFGYYGLSVWFPDVI) form a helical membrane-spanning segment. At 459–578 (KPLQSDEYAL…CQITFDDDYS (120 aa)) the chain is on the extracellular side. Tyrosine 466 is modified (phosphotyrosine). Residues asparagine 480, asparagine 484, asparagine 534, asparagine 559, and asparagine 565 are each glycosylated (N-linked (GlcNAc...) asparagine). The (Microbial infection) C.botulinum neurotoxin type A-binding stretch occupies residues 519–563 (SCTFEDVTSVNTYFKNCTFIDTVFDNTDFEPYKFIDSEFKNCSFF). Residues 579–599 (AYWIYFVNFLGTLAVLPGNIV) traverse the membrane as a helical segment. Over 600 to 609 (SALLMDRIGR) the chain is Cytoplasmic. The helical transmembrane segment at 610–630 (LTMLGGSMVLSGISCFFLWFG) threads the bilayer. The Extracellular portion of the chain corresponds to 631–636 (TSESMM). A helical transmembrane segment spans residues 637-657 (IGMLCLYNGLTISAWNSLDVV). The Cytoplasmic portion of the chain corresponds to 658-669 (TVELYPTDRRAT). A helical membrane pass occupies residues 670–690 (GFGFLNALCKAAAVLGNLIFG). At 691–698 (SLVSITKS) the chain is on the extracellular side. Residues 699–719 (IPILLASTVLVCGGLVGLCLP) form a helical membrane-spanning segment. Residues 720-727 (DTRTQVLM) are Cytoplasmic-facing.

It belongs to the major facilitator superfamily. Interacts with SYT1 in a calcium-dependent manner. As to quaternary structure, (Microbial infection) Interacts with C.botulinum neurotoxin type A1 and type A2 (BoNT/A, botA). Interaction is improved by glycosylation of SV2. N-glycosylated. Upon expression in a kidney cell line the most abundant glycan on Asn-534 is GlcNAc(3)Hex(5), while on Asn-559 and Asn-565 the most abundant glycan is GlcNAc2Fuc1Man3GlcNAc3Gal3. Both Asn-559 and Asn-565 have a high degree of glycan heterogeneity.

The protein resides in the cytoplasmic vesicle. It is found in the secretory vesicle. The protein localises to the synaptic vesicle membrane. Functionally, plays a role in the control of regulated secretion in neural and endocrine cells, enhancing selectively low-frequency neurotransmission. Positively regulates vesicle fusion by maintaining the readily releasable pool of secretory vesicles. In terms of biological role, (Microbial infection) Receptor for C.botulinum neurotoxin type A (BoNT/A, botA); the toxin probably binds via extracellular loop 4. Recognition by BoNT/A relies on both protein-protein and protein-N-glycosylation; glycosylation of Asn-559 increases its affinity for BoNT/A. Also serves as a receptor for the closely related C.botulinum neurotoxin type A2; glycosylation is not essential but enhances the interaction. (Microbial infection) Possible receptor for C.botulinum neurotoxin type D (BoNT/D, botD); note that type D does not usually infect humans. This chain is Synaptic vesicle glycoprotein 2C (SV2C), found in Homo sapiens (Human).